The primary structure comprises 78 residues: Large ribosomal subunit protein bL28 (78 aa).

This sequence belongs to the bacterial ribosomal protein bL28 family.

The chain is Large ribosomal subunit protein bL28 from Hamiltonella defensa subsp. Acyrthosiphon pisum (strain 5AT).